The primary structure comprises 369 residues: Methionine import ATP-binding protein MetN (369 aa).

One can recognise an ABC transporter domain in the interval V31 to L266. G63–S70 serves as a coordination point for ATP.

Belongs to the ABC transporter superfamily. Methionine importer (TC 3.A.1.24) family. In terms of assembly, the complex is composed of two ATP-binding proteins (MetN), two transmembrane proteins (MetI) and a solute-binding protein (MetQ).

Its subcellular location is the cell inner membrane. The enzyme catalyses L-methionine(out) + ATP + H2O = L-methionine(in) + ADP + phosphate + H(+). The catalysed reaction is D-methionine(out) + ATP + H2O = D-methionine(in) + ADP + phosphate + H(+). In terms of biological role, part of the ABC transporter complex MetNIQ involved in methionine import. Responsible for energy coupling to the transport system. This is Methionine import ATP-binding protein MetN from Brucella abortus (strain 2308).